Reading from the N-terminus, the 212-residue chain is Thymidylate kinase (212 aa).

11–18 is a binding site for ATP; the sequence is GLEGAGKT.

This sequence belongs to the thymidylate kinase family.

The catalysed reaction is dTMP + ATP = dTDP + ADP. In terms of biological role, phosphorylation of dTMP to form dTDP in both de novo and salvage pathways of dTTP synthesis. This is Thymidylate kinase from Buchnera aphidicola subsp. Schizaphis graminum (strain Sg).